Here is a 501-residue protein sequence, read N- to C-terminus: Cytochrome P450 monooxygenase janQ (501 aa).

The chain crosses the membrane as a helical span at residues 1-16; sequence MVLGLLAFIWLMRAWR. N-linked (GlcNAc...) asparagine glycosylation is present at Asn-132. Cys-439 is a binding site for heme.

It belongs to the cytochrome P450 family. Heme is required as a cofactor.

The protein resides in the membrane. Its pathway is secondary metabolite biosynthesis. Cytochrome P450 monooxygenase; part of the gene cluster that mediates the biosynthesis of the indole diterpenes janthitremanes such as shearinine K or shearinine A. The geranylgeranyl diphosphate (GGPP) synthase janG catalyzes the first step in janthitremane biosynthesis via conversion of farnesyl pyrophosphate and isopentyl pyrophosphate into geranylgeranyl pyrophosphate (GGPP). Condensation of indole-3-glycerol phosphate with GGPP by the prenyl transferase janC then forms 3-geranylgeranylindole (3-GGI). Epoxidation by the FAD-dependent monooxygenase janM leads to a epoxidized-GGI that is substrate of the terpene cyclase janB for cyclization to yield paspaline. Paspaline is subsequently converted to 13-desoxypaspaline by the cytochrome P450 monooxygenase janP, via beta-PC-M6 in a series of alpha-face oxidations. The cytochrome P450 monooxygenase janQ is proposed to carry out sequential beta-face oxidation steps at C-7 and C-13 of 13-desoxypaspaline to form paspalicine and paspalinine respectively. The indole diterpene prenyltransferase janD may then convert paspalinine into shearinine K which is substrate of janO and/or additional enzymes for oxidation and cyclization to generate shearinine A. This is Cytochrome P450 monooxygenase janQ from Penicillium janthinellum (Penicillium vitale).